The sequence spans 380 residues: Nucleoporin Nup43 (380 aa).

Met-1 carries the post-translational modification N-acetylmethionine. WD repeat units follow at residues 8–57 (FVSQ…NLDS), 72–110 (RHHG…QTLS), 119–166 (HYHT…AVRT), 170–208 (ADSS…SEPC), 215–255 (GDRV…MPVS), and 259–299 (AHEA…PEKS).

As to quaternary structure, component of the Nup107-160 subcomplex of the nuclear pore complex (NPC). The Nup107-160 subcomplex includes NUP160, NUP133, NUP107, NUP98, NUP85, NUP43, NUP37, SEH1 and SEC13.

The protein resides in the chromosome. It localises to the centromere. It is found in the kinetochore. Its subcellular location is the nucleus. The protein localises to the nuclear pore complex. Functionally, component of the Nup107-160 subcomplex of the nuclear pore complex (NPC). The Nup107-160 subcomplex is required for the assembly of a functional NPC. The Nup107-160 subcomplex is also required for normal kinetochore microtubule attachment, mitotic progression and chromosome segregation. This is Nucleoporin Nup43 (Nup43) from Mus musculus (Mouse).